Reading from the N-terminus, the 412-residue chain is Polyferredoxin protein MvhB (412 aa).

12 consecutive 4Fe-4S ferredoxin-type domains span residues 2 to 29 (IVIN…VKPE), 30 to 57 (DVIY…HEDI), 66 to 95 (KKIT…LVND), 96 to 127 (GKAS…IEGV), 138 to 166 (DKPI…LPKY), 168 to 197 (ESIE…ISGK), 207 to 236 (ENFT…PKSD), 237 to 265 (LTVS…LEVK), 275 to 304 (EGIV…VVSP), 311 to 344 (GLKK…LVEV), 356 to 385 (NRIQ…LTDD), and 386 to 412 (EKLP…LLIK). Residues Cys9, Cys12, Cys15, and Cys19 each contribute to the [4Fe-4S] cluster site. Residues Cys75, Cys78, Cys81, Cys85, Cys107, Cys110, Cys113, Cys117, Cys146, Cys149, Cys152, Cys156, Cys177, Cys180, Cys183, Cys187, Cys216, Cys219, Cys222, Cys226, Cys245, Cys248, Cys251, Cys255, Cys284, Cys287, Cys290, Cys294, Cys324, Cys327, Cys330, Cys334, Cys365, Cys368, Cys371, and Cys375 each coordinate [4Fe-4S] cluster.

Requires [4Fe-4S] cluster as cofactor.

This chain is Polyferredoxin protein MvhB (mvhB), found in Methanothermus fervidus.